A 505-amino-acid chain; its full sequence is Chromosomal replication initiator protein DnaA (505 aa).

Residues 1-90 are domain I, interacts with DnaA modulators; sequence MSVELWQQCV…RRSSAPRAAP (90 aa). Residues 91–168 are domain II; sequence NAPVSAAVAA…QVEGALKHTS (78 aa). Residues 169 to 385 are domain III, AAA+ region; it reads YLNRTFTFDT…GALKRVIAHS (217 aa). Residues glycine 213, glycine 215, lysine 216, and threonine 217 each contribute to the ATP site. The tract at residues 386-505 is domain IV, binds dsDNA; the sequence is HFMGRDITIE…YKNLLRTLTT (120 aa).

This sequence belongs to the DnaA family. As to quaternary structure, oligomerizes as a right-handed, spiral filament on DNA at oriC.

Its subcellular location is the cytoplasm. Its function is as follows. Plays an essential role in the initiation and regulation of chromosomal replication. ATP-DnaA binds to the origin of replication (oriC) to initiate formation of the DNA replication initiation complex once per cell cycle. Binds the DnaA box (a 9 base pair repeat at the origin) and separates the double-stranded (ds)DNA. Forms a right-handed helical filament on oriC DNA; dsDNA binds to the exterior of the filament while single-stranded (ss)DNA is stabiized in the filament's interior. The ATP-DnaA-oriC complex binds and stabilizes one strand of the AT-rich DNA unwinding element (DUE), permitting loading of DNA polymerase. After initiation quickly degrades to an ADP-DnaA complex that is not apt for DNA replication. Binds acidic phospholipids. The sequence is that of Chromosomal replication initiator protein DnaA from Pseudomonas putida (strain ATCC 700007 / DSM 6899 / JCM 31910 / BCRC 17059 / LMG 24140 / F1).